The primary structure comprises 890 residues: DNA mismatch repair protein MutS (890 aa).

ATP is bound at residue 645–652; the sequence is GPNMAGKS.

Belongs to the DNA mismatch repair MutS family.

Its function is as follows. This protein is involved in the repair of mismatches in DNA. It is possible that it carries out the mismatch recognition step. This protein has a weak ATPase activity. This Rickettsia rickettsii (strain Iowa) protein is DNA mismatch repair protein MutS.